Consider the following 334-residue polypeptide: Sterol 4-C-methyltransferase strm-1 (334 aa).

Belongs to the class I-like SAM-binding methyltransferase superfamily. Erg6/SMT family. In terms of tissue distribution, expressed in the pharynx and hypodermal syncytium.

The catalysed reaction is 5alpha-cholest-7-en-3-one + S-adenosyl-L-methionine = 4alpha-methyl-5alpha-cholest-7-en-3-one + S-adenosyl-L-homocysteine + H(+). It participates in steroid hormone biosynthesis; dafachronic acid biosynthesis. Functionally, catalyzes the methyl transfer from S-adenosyl-methionine to the C-4 of the A-ring sterols such as lathosterone (5alpha-cholest-7-en-3-one) thereby rendering them unsuitable as ligand precursors. May irreversibly shunt sterols away from hormone dafachronic acid production. Dafachronic acids act as ligands and bind directly to the nuclear hormone receptor (NHR) daf-12 suppressing dauer formation and inducing reproductive growth. By reducing the biosynthesis of dafachronic acids, this methyltransferase can regulate dauer larva formation. This Caenorhabditis elegans protein is Sterol 4-C-methyltransferase strm-1 (strm-1).